A 337-amino-acid chain; its full sequence is Cytoskeleton protein RodZ (337 aa).

Topologically, residues 1-111 are cytoplasmic; that stretch reads MNTEATHDQN…LGKRRKKRDG (111 aa). The 53-residue stretch at 19-71 folds into the HTH cro/C1-type domain; sequence LRNAREQLGLSQQAVAERLCLKVSTVRDIEEDKAPADLASTFLRGYIRSYARL. A DNA-binding region (H-T-H motif) is located at residues 30–49; sequence QQAVAERLCLKVSTVRDIEE. A helical; Signal-anchor for type II membrane protein transmembrane segment spans residues 112-132; it reads WLMTFTWLVLFVVIGLSGAWW. Topologically, residues 133–337 are periplasmic; sequence WQDHKAQQEE…TLNAEQSPAQ (205 aa). Residues 145–167 are compositionally biased toward polar residues; the sequence is TMADQSSAELSSNSEQGQSVPLN. Residues 145–235 form a disordered region; it reads TMADQSSAEL…PTAATTPDGA (91 aa). A compositionally biased stretch (low complexity) spans 168-207; that stretch reads TSTTTDPATTSTPPASVDTTATNTQTPAVTAPAPAVDPQQ. The segment covering 208–218 has biased composition (polar residues); sequence NAVVSPSQANV. Residues 219 to 235 are compositionally biased toward low complexity; the sequence is DTAATPAPTAATTPDGA.

This sequence belongs to the RodZ family.

The protein resides in the cell inner membrane. Cytoskeletal protein that is involved in cell-shape control through regulation of the length of the long axis. This Shigella boydii serotype 4 (strain Sb227) protein is Cytoskeleton protein RodZ.